Here is a 232-residue protein sequence, read N- to C-terminus: Phosphoadenosine 5'-phosphosulfate reductase (232 aa).

Cys228 (nucleophile; cysteine thiosulfonate intermediate) is an active-site residue.

It belongs to the PAPS reductase family. CysH subfamily.

It is found in the cytoplasm. The catalysed reaction is [thioredoxin]-disulfide + sulfite + adenosine 3',5'-bisphosphate + 2 H(+) = [thioredoxin]-dithiol + 3'-phosphoadenylyl sulfate. It participates in sulfur metabolism; hydrogen sulfide biosynthesis; sulfite from sulfate: step 3/3. In terms of biological role, catalyzes the formation of sulfite from phosphoadenosine 5'-phosphosulfate (PAPS) using thioredoxin as an electron donor. The sequence is that of Phosphoadenosine 5'-phosphosulfate reductase from Synechococcus sp. (strain ATCC 27144 / PCC 6301 / SAUG 1402/1) (Anacystis nidulans).